We begin with the raw amino-acid sequence, 398 residues long: Ribosomal RNA large subunit methyltransferase I (398 aa).

The PUA domain occupies 2–79 (SVRLVLAKGR…LSESIDIAFF (78 aa)).

This sequence belongs to the methyltransferase superfamily. RlmI family.

Its subcellular location is the cytoplasm. The enzyme catalyses cytidine(1962) in 23S rRNA + S-adenosyl-L-methionine = 5-methylcytidine(1962) in 23S rRNA + S-adenosyl-L-homocysteine + H(+). Functionally, specifically methylates the cytosine at position 1962 (m5C1962) of 23S rRNA. The polypeptide is Ribosomal RNA large subunit methyltransferase I (Shigella dysenteriae serotype 1 (strain Sd197)).